Consider the following 252-residue polypeptide: MDSKMIAHNMSLTPTLAQWKKLRLKPKHTFVVGVLARPTDDISEETLRKTNVYKDNWFDKLAINHLSKSVQAATGISNNKSGFDSLVEAATVASQKFNTTQQQGIILDALDRAFPKPILSVIRRVMPPSKLAREYFAVFTTIFFAWLLGPSEVRESEINGRREKNIVHIKKCRFLEETNCVGMCINLCKMPSQLFIKDSFGMPVNMVPNFDDMSCEMIFGQEPPASTDDPALKQPCYKLCKAKKNHATQCLS.

Residues 1-43 (MDSKMIAHNMSLTPTLAQWKKLRLKPKHTFVVGVLARPTDDIS) constitute a chloroplast transit peptide.

Fe cation is required as a cofactor. In terms of tissue distribution, highly expressed in roots. Expressed at low levels in leaves and stems.

It localises to the plastid. It is found in the chloroplast. The catalysed reaction is all-trans-beta-carotene = 9-cis-beta-carotene. In terms of biological role, involved in strigolactones biosynthesis by catalyzing the isomerization of the C9-C10 double bond in all-trans-beta-carotene leading to 9-cis-beta-carotene and providing the substrate for CCD7. Strigolactones are hormones that inhibit tillering and shoot branching through the MAX-dependent pathway, contribute to the regulation of shoot architectural response to phosphate-limiting conditions and function as rhizosphere signals that stimulate hyphal branching of arbuscular mycorrhizal fungi and trigger seed germination of root parasitic weeds. The polypeptide is Beta-carotene isomerase D27, chloroplastic (Medicago truncatula (Barrel medic)).